A 359-amino-acid polypeptide reads, in one-letter code: RuBisCO accumulation factor 1 (359 aa).

The N-terminal alpha-helix stretch occupies residues 12–195 (LSPEETDALF…RQKIEQLLSD (184 aa)). Residues 219–345 (PLLIPVAGSL…VLLVMRPKKI (127 aa)) are C-terminal beta-sheet.

This sequence belongs to the RAF family. In terms of assembly, homodimer. Forms an RbcL(8)-Raf1(8) complex. Forms complexes of many stoichiometries with RbcL with and without RbcS. RbcX and Raf1 can bind simultaneously to RbcL.

Its subcellular location is the cytoplasm. Functionally, a major RuBisCO chaperone. Acts after GroEL-GroES chaperonin to fold and/or assemble the large subunit of RuBisCO (ccbL, rbcL). Cooperates with RbcX in RbcL folding, plays the major role in assembly of dimers into RbcL(8)-Raf1(8) intermediate complexes. RbcS replaces Raf1, leading to holoenzyme formation. In terms of biological role, raf1 and RbcX are probably functionally redundant; it has been suggested they may cooperate. This is RuBisCO accumulation factor 1 from Picosynechococcus sp. (strain ATCC 27264 / PCC 7002 / PR-6) (Agmenellum quadruplicatum).